The following is a 1198-amino-acid chain: Tetratricopeptide repeat protein 17 (1198 aa).

One copy of the TPR 1 repeat lies at 295-328; sequence FTSYYTLGNIYAMLGEYNHSVLCYDHALQAKPGF. A coiled-coil region spans residues 340–382; the sequence is CQQKLEQKLEAQHRSLQRTLNELKEYQKQHDHYLRQQEILEKH. TPR repeat units lie at residues 619–652 and 689–722; these read WLIL…APVQ and PLTF…TTRC. Disordered stretches follow at residues 771-825 and 903-924; these read PQSL…KSEE and KKPK…QAEN. Positions 903-914 are enriched in basic residues; sequence KKPKGDHKKPPG. TPR repeat units lie at residues 1071 to 1105, 1108 to 1141, and 1142 to 1175; these read SWVL…APHQ, DVPL…APHF, and AVNH…QPEF.

This sequence belongs to the TTC17 family. Interacts with CATIP. As to expression, expressed in germ cells as well as in somatic cells of the testis (at protein level). Ubiquitous.

It localises to the cytoplasm. The protein resides in the cell membrane. It is found in the cytoskeleton. Its function is as follows. Plays a role in primary ciliogenesis by modulating actin polymerization. The chain is Tetratricopeptide repeat protein 17 (Ttc17) from Rattus norvegicus (Rat).